Reading from the N-terminus, the 43-residue chain is Gene 75 protein (43 aa).

The protein is Gene 75 protein (75) of Mycobacterium (Mycobacteriophage L5).